We begin with the raw amino-acid sequence, 108 residues long: Pumilarin (108 aa).

Residues 1-38 constitute a propeptide that is removed on maturation; sequence MTETKNEIKLHVLFGALAVGFLMLALFSFSLQMLPVAD. Residues 39-108 constitute a cross-link (cyclopeptide (Leu-Trp)); the sequence is LAKEFGIPGS…KKGRKAVIAW (70 aa).

The cross-link permits a high resistance to proteolysis. Is more resistant to specific proteases than to unspecific proteases.

It is found in the secreted. Cyclopeptide antibiotic that inhibits both Gram-positive and Gram-negative bacteria. Shows potent to weak activities against M.flavus (MIC=3 ug/ml), B.cereus (MIC=12 ug/ml), B.pumilus (MIC=12 ug/ml), E.coli (MIC=12 ug/ml), and S.pneumoniae (MIC=47 ug/ml). May act by forming pores. This chain is Pumilarin, found in Bacillus safensis.